Here is a 182-residue protein sequence, read N- to C-terminus: Oligoribonuclease (182 aa).

The Exonuclease domain maps to 8-171 (LIWIDLEMTG…DDIRESIKEL (164 aa)). Y129 is a catalytic residue.

Belongs to the oligoribonuclease family.

The protein resides in the cytoplasm. 3'-to-5' exoribonuclease specific for small oligoribonucleotides. This Haemophilus influenzae (strain 86-028NP) protein is Oligoribonuclease.